The sequence spans 107 residues: Integration host factor subunit alpha (107 aa).

Belongs to the bacterial histone-like protein family. As to quaternary structure, heterodimer of an alpha and a beta chain.

This protein is one of the two subunits of integration host factor, a specific DNA-binding protein that functions in genetic recombination as well as in transcriptional and translational control. The chain is Integration host factor subunit alpha from Mesorhizobium japonicum (strain LMG 29417 / CECT 9101 / MAFF 303099) (Mesorhizobium loti (strain MAFF 303099)).